The primary structure comprises 182 residues: A-type ATP synthase subunit E (182 aa).

This sequence belongs to the V-ATPase E subunit family. As to quaternary structure, has multiple subunits with at least A(3), B(3), C, D, E, F, H, I and proteolipid K(x).

The protein localises to the cell membrane. Functionally, component of the A-type ATP synthase that produces ATP from ADP in the presence of a proton gradient across the membrane. The sequence is that of A-type ATP synthase subunit E from Picrophilus torridus (strain ATCC 700027 / DSM 9790 / JCM 10055 / NBRC 100828 / KAW 2/3).